We begin with the raw amino-acid sequence, 232 residues long: N-(5'-phosphoribosyl)anthranilate isomerase (232 aa).

It belongs to the TrpF family.

The enzyme catalyses N-(5-phospho-beta-D-ribosyl)anthranilate = 1-(2-carboxyphenylamino)-1-deoxy-D-ribulose 5-phosphate. The protein operates within amino-acid biosynthesis; L-tryptophan biosynthesis; L-tryptophan from chorismate: step 3/5. The sequence is that of N-(5'-phosphoribosyl)anthranilate isomerase (TRP1) from Lipomyces starkeyi (Oleaginous yeast).